A 457-amino-acid chain; its full sequence is Adenylosuccinate synthetase isozyme 1 (457 aa).

The disordered stretch occupies residues 1-24; the sequence is MSGTRASNDRPPGTGGVKRGRLQQ. Residues 42–48 and 70–72 contribute to the GTP site; these read GDEGKGK and GHT. Residue D43 is the Proton acceptor of the active site. Mg(2+) is bound by residues D43 and G70. Position 43 (D43) interacts with substrate. IMP is bound by residues 43 to 46, 68 to 71, T163, R177, N256, T271, and R335; these read DEGK and NAGH. H71 serves as the catalytic Proton donor. Residue 331–337 participates in substrate binding; the sequence is VTTGRKR. Residues R337, 363 to 365, and 445 to 448 each bind GTP; these read KLD and GVGK.

Belongs to the adenylosuccinate synthetase family. As to quaternary structure, homodimer. It depends on Mg(2+) as a cofactor. In terms of tissue distribution, high levels in muscle.

It is found in the cytoplasm. The protein localises to the membrane. It carries out the reaction IMP + L-aspartate + GTP = N(6)-(1,2-dicarboxyethyl)-AMP + GDP + phosphate + 2 H(+). It functions in the pathway purine metabolism; AMP biosynthesis via de novo pathway; AMP from IMP: step 1/2. Its activity is regulated as follows. Weakly inhibited by AMP non-competitively to all substrates. Inhibited by IMP non-competitively with respect to GTP. Inhibited by fructose 1,6-bisphosphate competitively with respect to IMP. Component of the purine nucleotide cycle (PNC), which interconverts IMP and AMP to regulate the nucleotide levels in various tissues, and which contributes to glycolysis and ammoniagenesis. Catalyzes the first committed step in the biosynthesis of AMP from IMP. This chain is Adenylosuccinate synthetase isozyme 1 (Adss1), found in Mus musculus (Mouse).